The chain runs to 291 residues: Phosphatidylcholine-sterol acyltransferase (291 aa).

Residue asparagine 28 is glycosylated (N-linked (GlcNAc...) asparagine). Serine 125 serves as the catalytic Nucleophile. Asparagine 179 carries an N-linked (GlcNAc...) asparagine glycan. Cysteine 220 and cysteine 263 are oxidised to a cystine. Aspartate 252 acts as the Charge relay system in catalysis. An N-linked (GlcNAc...) asparagine glycan is attached at asparagine 280.

The protein belongs to the AB hydrolase superfamily. Lipase family.

The protein localises to the secreted. It catalyses the reaction a sterol + a 1,2-diacyl-sn-glycero-3-phosphocholine = a sterol ester + a 1-acyl-sn-glycero-3-phosphocholine. With respect to regulation, APOA1 is the most potent activator in plasma. Also activated by APOE, APOC1 and APOA4. In terms of biological role, central enzyme in the extracellular metabolism of plasma lipoproteins. Synthesized mainly in the liver and secreted into plasma where it converts cholesterol and phosphatidylcholines (lecithins) to cholesteryl esters and lysophosphatidylcholines on the surface of high and low density lipoproteins (HDLs and LDLs). The cholesterol ester is then transported back to the liver. Has a preference for plasma 16:0-18:2 or 18:O-18:2 phosphatidylcholines. Also produced in the brain by primary astrocytes, and esterifies free cholesterol on nascent APOE-containing lipoproteins secreted from glia and influences cerebral spinal fluid (CSF) APOE- and APOA1 levels. Together with APOE and the cholesterol transporter ABCA1, plays a key role in the maturation of glial-derived, nascent lipoproteins. Required for remodeling high-density lipoprotein particles into their spherical forms. In Myodes glareolus (Bank vole), this protein is Phosphatidylcholine-sterol acyltransferase (LCAT).